Reading from the N-terminus, the 541-residue chain is Chaperonin GroEL (541 aa).

Residues 30 to 33 (TLGP), Lys51, 87 to 91 (DGTTT), Gly415, 479 to 481 (NAA), and Asp495 each bind ATP.

It belongs to the chaperonin (HSP60) family. In terms of assembly, forms a cylinder of 14 subunits composed of two heptameric rings stacked back-to-back. Interacts with the co-chaperonin GroES.

It localises to the cytoplasm. It carries out the reaction ATP + H2O + a folded polypeptide = ADP + phosphate + an unfolded polypeptide.. Its function is as follows. Together with its co-chaperonin GroES, plays an essential role in assisting protein folding. The GroEL-GroES system forms a nano-cage that allows encapsulation of the non-native substrate proteins and provides a physical environment optimized to promote and accelerate protein folding. This is Chaperonin GroEL from Acinetobacter baumannii (strain SDF).